A 250-amino-acid polypeptide reads, in one-letter code: MELLLFVMSLILLTFSKAMPLFDHNSFYFEKLDDCIAAVINCTRSEVPLLLEPIYQPPVYNEDVMSILLKPPTKKKPFSRIMVTNEFLSDFLLLQDNPEQLRTLFALIGDPESRDNWLNFFNGFQTCSPSVGITTCISDNCRKYLPERITYVNNFFVDNIAGLEFNISENTDSFYSNIGFLLYLENPATGITKIIRFPFNSLTLFDTILNCLKYFHLKTGVEFDLLKQMEAYNSKLPFRSSRPTILIRNT.

Residues 1-18 form the signal peptide; the sequence is MELLLFVMSLILLTFSKA. In terms of domain architecture, gL betaherpesvirus-type spans 31 to 239; it reads KLDDCIAAVI…EAYNSKLPFR (209 aa). Cys136 and Cys141 are oxidised to a cystine.

Belongs to the herpesviridae glycoprotein L (gL) family. Betaherpesvirinae gL subfamily. Interacts with glycoprotein H (gH); this interaction is necessary for the correct processing and cell surface expression of gH. Part of a gH-gL-gO complex.

The protein localises to the virion membrane. Its subcellular location is the host cell membrane. It localises to the host Golgi apparatus. The protein resides in the host trans-Golgi network. Its function is as follows. The heterodimer glycoprotein H-glycoprotein L is required for the fusion of viral and plasma membranes leading to virus entry into the host cell. Acts as a functional inhibitor of gH and maintains gH in an inhibited form. Upon binding to host integrins, gL dissociates from gH leading to activation of the viral fusion glycoproteins gB and gH. This Homo sapiens (Human) protein is Envelope glycoprotein L.